The chain runs to 215 residues: Octanoyltransferase (215 aa).

In terms of domain architecture, BPL/LPL catalytic spans 31–206 (PDSQDEIWLV…QLVKHLDYAE (176 aa)). Substrate-binding positions include 70–77 (RGGQVTYH), 137–139 (SLG), and 150–152 (GLA). Cys168 serves as the catalytic Acyl-thioester intermediate.

The protein belongs to the LipB family.

Its subcellular location is the cytoplasm. It carries out the reaction octanoyl-[ACP] + L-lysyl-[protein] = N(6)-octanoyl-L-lysyl-[protein] + holo-[ACP] + H(+). It participates in protein modification; protein lipoylation via endogenous pathway; protein N(6)-(lipoyl)lysine from octanoyl-[acyl-carrier-protein]: step 1/2. Catalyzes the transfer of endogenously produced octanoic acid from octanoyl-acyl-carrier-protein onto the lipoyl domains of lipoate-dependent enzymes. Lipoyl-ACP can also act as a substrate although octanoyl-ACP is likely to be the physiological substrate. This is Octanoyltransferase from Pseudomonas putida (strain GB-1).